The sequence spans 200 residues: MRLFGMCESVKKKAAVIVVVSLMAFCCAGFAVAAEHGAEAAPKGWVATDTFRVMNFAVLAIALFLLLRKPVAGALNNRIAGIREELARLEAQKEEARKALEAYNERLKMLDKEAEKIIEDYKKQGEAAKARIMESAQASAAKLEEQARRNIDNEFESARQKLRLDIFEQAVARAEALVTEKITPDDQHRLVEEYLDKAVL.

Residues 14–34 (AAVIVVVSLMAFCCAGFAVAA) form a helical membrane-spanning segment.

It belongs to the ATPase B chain family. In terms of assembly, F-type ATPases have 2 components, F(1) - the catalytic core - and F(0) - the membrane proton channel. F(1) has five subunits: alpha(3), beta(3), gamma(1), delta(1), epsilon(1). F(0) has three main subunits: a(1), b(2) and c(10-14). The alpha and beta chains form an alternating ring which encloses part of the gamma chain. F(1) is attached to F(0) by a central stalk formed by the gamma and epsilon chains, while a peripheral stalk is formed by the delta and b chains.

It is found in the cell inner membrane. Its function is as follows. F(1)F(0) ATP synthase produces ATP from ADP in the presence of a proton or sodium gradient. F-type ATPases consist of two structural domains, F(1) containing the extramembraneous catalytic core and F(0) containing the membrane proton channel, linked together by a central stalk and a peripheral stalk. During catalysis, ATP synthesis in the catalytic domain of F(1) is coupled via a rotary mechanism of the central stalk subunits to proton translocation. Component of the F(0) channel, it forms part of the peripheral stalk, linking F(1) to F(0). The protein is ATP synthase subunit b 1 of Desulfosudis oleivorans (strain DSM 6200 / JCM 39069 / Hxd3) (Desulfococcus oleovorans).